Consider the following 376-residue polypeptide: Glucose-1-phosphate adenylyltransferase (376 aa).

Residues Tyr101, Gly166, 181 to 182 (EK), and Ser192 each bind alpha-D-glucose 1-phosphate.

It belongs to the bacterial/plant glucose-1-phosphate adenylyltransferase family. Homotetramer.

It catalyses the reaction alpha-D-glucose 1-phosphate + ATP + H(+) = ADP-alpha-D-glucose + diphosphate. It functions in the pathway glycan biosynthesis; glycogen biosynthesis. Its function is as follows. Involved in the biosynthesis of ADP-glucose, a building block required for the elongation reactions to produce glycogen. Catalyzes the reaction between ATP and alpha-D-glucose 1-phosphate (G1P) to produce pyrophosphate and ADP-Glc. This chain is Glucose-1-phosphate adenylyltransferase, found in Bacillus cereus (strain ATCC 14579 / DSM 31 / CCUG 7414 / JCM 2152 / NBRC 15305 / NCIMB 9373 / NCTC 2599 / NRRL B-3711).